The primary structure comprises 178 residues: ATP-dependent protease subunit HslV (178 aa).

The active site involves Thr7. Residues Gly162, Cys165, and Thr168 each coordinate Na(+).

Belongs to the peptidase T1B family. HslV subfamily. In terms of assembly, a double ring-shaped homohexamer of HslV is capped on each side by a ring-shaped HslU homohexamer. The assembly of the HslU/HslV complex is dependent on binding of ATP.

The protein localises to the cytoplasm. The enzyme catalyses ATP-dependent cleavage of peptide bonds with broad specificity.. Allosterically activated by HslU binding. Functionally, protease subunit of a proteasome-like degradation complex believed to be a general protein degrading machinery. This Cupriavidus taiwanensis (strain DSM 17343 / BCRC 17206 / CCUG 44338 / CIP 107171 / LMG 19424 / R1) (Ralstonia taiwanensis (strain LMG 19424)) protein is ATP-dependent protease subunit HslV.